The chain runs to 126 residues: uncharacterized protein (126 aa).

This is an uncharacterized protein from Xylella fastidiosa (strain 9a5c).